Consider the following 195-residue polypeptide: Small ribosomal subunit protein uS4 (195 aa).

The region spanning 109–183 is the S4 RNA-binding domain; the sequence is RRLQTQVFKL…VKRKNLKKNQ (75 aa). A disordered region spans residues 165–195; it reads PFGGGRPGRVKRKNLKKNQGGGGGAAEEEED.

The protein belongs to the universal ribosomal protein uS4 family. As to quaternary structure, component of the small ribosomal subunit. Identified in a IGF2BP1-dependent mRNP granule complex containing untranslated mRNAs. Part of the small subunit (SSU) processome, composed of more than 70 proteins and the RNA chaperone small nucleolar RNA (snoRNA) U3.

It is found in the cytoplasm. The protein resides in the nucleus. Its subcellular location is the nucleolus. Its function is as follows. Component of the small ribosomal subunit. The ribosome is a large ribonucleoprotein complex responsible for the synthesis of proteins in the cell. Part of the small subunit (SSU) processome, first precursor of the small eukaryotic ribosomal subunit. During the assembly of the SSU processome in the nucleolus, many ribosome biogenesis factors, an RNA chaperone and ribosomal proteins associate with the nascent pre-rRNA and work in concert to generate RNA folding, modifications, rearrangements and cleavage as well as targeted degradation of pre-ribosomal RNA by the RNA exosome. The sequence is that of Small ribosomal subunit protein uS4 from Drosophila melanogaster (Fruit fly).